Reading from the N-terminus, the 492-residue chain is Fascin-2 (492 aa).

Belongs to the fascin family. Exclusively expressed in the eye, specifically in photoreceptor cells.

Its subcellular location is the cytoplasm. The protein localises to the cytoskeleton. The protein resides in the cell projection. It is found in the stereocilium. Acts as an actin bundling protein. May play a pivotal role in photoreceptor cell-specific events, such as disk morphogenesis. The sequence is that of Fascin-2 (FSCN2) from Bos taurus (Bovine).